A 386-amino-acid chain; its full sequence is 1-deoxy-D-xylulose 5-phosphate reductoisomerase (386 aa).

Residues Thr10, Gly11, Ser12, Ile13, Gly36, Asn38, and Asn122 each coordinate NADPH. Position 123 (Lys123) interacts with 1-deoxy-D-xylulose 5-phosphate. Glu124 contributes to the NADPH binding site. Residue Asp148 participates in Mn(2+) binding. The 1-deoxy-D-xylulose 5-phosphate site is built by Ser149, Glu150, Ser174, and His197. Residue Glu150 participates in Mn(2+) binding. Gly203 serves as a coordination point for NADPH. Ser210, Asn215, Lys216, and Glu219 together coordinate 1-deoxy-D-xylulose 5-phosphate. Residue Glu219 participates in Mn(2+) binding.

This sequence belongs to the DXR family. The cofactor is Mg(2+). Mn(2+) is required as a cofactor.

It carries out the reaction 2-C-methyl-D-erythritol 4-phosphate + NADP(+) = 1-deoxy-D-xylulose 5-phosphate + NADPH + H(+). The protein operates within isoprenoid biosynthesis; isopentenyl diphosphate biosynthesis via DXP pathway; isopentenyl diphosphate from 1-deoxy-D-xylulose 5-phosphate: step 1/6. In terms of biological role, catalyzes the NADPH-dependent rearrangement and reduction of 1-deoxy-D-xylulose-5-phosphate (DXP) to 2-C-methyl-D-erythritol 4-phosphate (MEP). In Geotalea uraniireducens (strain Rf4) (Geobacter uraniireducens), this protein is 1-deoxy-D-xylulose 5-phosphate reductoisomerase.